Reading from the N-terminus, the 144-residue chain is Large ribosomal subunit protein uL15 (144 aa).

The disordered stretch occupies residues 1–58 (MNLSNLRAPRKANEKKKRVGRGMGSGMGKTSARGHKGQRSRSGSRMMRGFEGGQMPLH). Basic residues predominate over residues 8-20 (APRKANEKKKRVG). The segment covering 40–49 (SRSGSRMMRG) has biased composition (low complexity).

Belongs to the universal ribosomal protein uL15 family. Part of the 50S ribosomal subunit.

Binds to the 23S rRNA. The polypeptide is Large ribosomal subunit protein uL15 (Koribacter versatilis (strain Ellin345)).